The sequence spans 440 residues: 5-methylthioadenosine/S-adenosylhomocysteine deaminase (440 aa).

Residues histidine 69 and histidine 71 each coordinate Zn(2+). Residues glutamate 98 and histidine 190 each coordinate substrate. Residue histidine 217 coordinates Zn(2+). Residues glutamate 220 and aspartate 305 each contribute to the substrate site. Aspartate 305 is a Zn(2+) binding site.

Belongs to the metallo-dependent hydrolases superfamily. MTA/SAH deaminase family. Zn(2+) is required as a cofactor.

The enzyme catalyses S-adenosyl-L-homocysteine + H2O + H(+) = S-inosyl-L-homocysteine + NH4(+). It carries out the reaction S-methyl-5'-thioadenosine + H2O + H(+) = S-methyl-5'-thioinosine + NH4(+). Functionally, catalyzes the deamination of 5-methylthioadenosine and S-adenosyl-L-homocysteine into 5-methylthioinosine and S-inosyl-L-homocysteine, respectively. Is also able to deaminate adenosine. This is 5-methylthioadenosine/S-adenosylhomocysteine deaminase from Desulfovibrio desulfuricans (strain ATCC 27774 / DSM 6949 / MB).